The following is a 37-amino-acid chain: Large ribosomal subunit protein bL36 (37 aa).

The protein belongs to the bacterial ribosomal protein bL36 family.

This Leptospira interrogans serogroup Icterohaemorrhagiae serovar Lai (strain 56601) protein is Large ribosomal subunit protein bL36.